The chain runs to 222 residues: UPF0441 protein CKO_04429 (222 aa).

Residues 177-194 are compositionally biased toward low complexity; that stretch reads TVPKTAMAPKPATTTTVT. Positions 177-222 are disordered; sequence TVPKTAMAPKPATTTTVTRGGFGESVAKQSTMQRSATGTSNRSMGG. A compositionally biased stretch (polar residues) spans 203–222; it reads AKQSTMQRSATGTSNRSMGG.

It belongs to the UPF0441 family.

The polypeptide is UPF0441 protein CKO_04429 (Citrobacter koseri (strain ATCC BAA-895 / CDC 4225-83 / SGSC4696)).